Consider the following 542-residue polypeptide: Chromatin structure-remodeling complex subunit rsc4 (542 aa).

The Bromo 1 domain occupies 6-116 (HNAPFDKTKF…NTANSLESKD (111 aa)). Disordered regions lie at residues 114–139 (SKDG…KPGT) and 246–327 (ISSF…PIPE). Over residues 119 to 128 (LNEEENEEME) the composition is skewed to acidic residues. The 111-residue stretch at 139-249 (TNEIDVPKVI…QLSSSLISSF (111 aa)) folds into the Bromo 2 domain. Residues 252 to 266 (QPKEHSPATSKHEPE) are compositionally biased toward basic and acidic residues. Phosphoserine occurs at positions 257, 271, 287, and 313. A compositionally biased stretch (low complexity) spans 268–280 (TPASPTPSVSAST). The segment covering 286 to 298 (TSVAPSFITSDQA) has biased composition (polar residues). Positions 304-322 (LKSEEAHVESFSKESEKDQ) are enriched in basic and acidic residues.

As to quaternary structure, component of the RSC complex composed of at least arp9, arp42, rsc1, rsc4, rsc7, rsc9, rsc58, sfh1, snf21, ssr1, ssr2, ssr3 and ssr4. The complex interacts with histone and histone variant components of centromeric chromatin.

The protein resides in the nucleus. In terms of biological role, component of the chromatin structure remodeling complex (RSC), which is involved in transcription regulation and nucleosome positioning. Controls particularly membrane and organelle development genes. The polypeptide is Chromatin structure-remodeling complex subunit rsc4 (rsc4) (Schizosaccharomyces pombe (strain 972 / ATCC 24843) (Fission yeast)).